The sequence spans 509 residues: Cytochrome P450 6A1 (509 aa).

Heme is bound at residue Cys449.

It belongs to the cytochrome P450 family. It depends on heme as a cofactor.

The protein localises to the endoplasmic reticulum membrane. It is found in the microsome membrane. The catalysed reaction is an organic molecule + reduced [NADPH--hemoprotein reductase] + O2 = an alcohol + oxidized [NADPH--hemoprotein reductase] + H2O + H(+). In terms of biological role, involved in the metabolism of insect hormones and in the breakdown of synthetic insecticides. The protein is Cytochrome P450 6A1 (CYP6A1) of Musca domestica (House fly).